The sequence spans 353 residues: Photosystem II protein D1 (353 aa).

Thr-2 bears the N-acetylthreonine mark. A Phosphothreonine modification is found at Thr-2. Transmembrane regions (helical) follow at residues 29 to 46 (YIGW…TATS), 118 to 133 (HFLL…EWEL), and 142 to 156 (WIAV…AATA). Chlorophyll a is bound at residue His-118. Tyr-126 lines the pheophytin a pocket. Asp-170 and Glu-189 together coordinate [CaMn4O5] cluster. The chain crosses the membrane as a helical span at residues 197–218 (FHMLGVAGVFGGSLFSAMHGSL). His-198 contacts chlorophyll a. Residues His-215 and 264-265 (SF) each bind a quinone. His-215 provides a ligand contact to Fe cation. His-272 lines the Fe cation pocket. Residues 274 to 288 (FLAAWPVVGIWFTAL) traverse the membrane as a helical segment. His-332, Glu-333, Asp-342, and Ala-344 together coordinate [CaMn4O5] cluster. The propeptide occupies 345-353 (AVEAPSTNG).

Belongs to the reaction center PufL/M/PsbA/D family. As to quaternary structure, PSII is composed of 1 copy each of membrane proteins PsbA, PsbB, PsbC, PsbD, PsbE, PsbF, PsbH, PsbI, PsbJ, PsbK, PsbL, PsbM, PsbT, PsbX, PsbY, PsbZ, Psb30/Ycf12, at least 3 peripheral proteins of the oxygen-evolving complex and a large number of cofactors. It forms dimeric complexes. It depends on The D1/D2 heterodimer binds P680, chlorophylls that are the primary electron donor of PSII, and subsequent electron acceptors. It shares a non-heme iron and each subunit binds pheophytin, quinone, additional chlorophylls, carotenoids and lipids. D1 provides most of the ligands for the Mn4-Ca-O5 cluster of the oxygen-evolving complex (OEC). There is also a Cl(-1) ion associated with D1 and D2, which is required for oxygen evolution. The PSII complex binds additional chlorophylls, carotenoids and specific lipids. as a cofactor. Post-translationally, tyr-161 forms a radical intermediate that is referred to as redox-active TyrZ, YZ or Y-Z. In terms of processing, C-terminally processed by CTPA; processing is essential to allow assembly of the oxygen-evolving complex and thus photosynthetic growth.

Its subcellular location is the plastid. It localises to the chloroplast thylakoid membrane. The catalysed reaction is 2 a plastoquinone + 4 hnu + 2 H2O = 2 a plastoquinol + O2. In terms of biological role, photosystem II (PSII) is a light-driven water:plastoquinone oxidoreductase that uses light energy to abstract electrons from H(2)O, generating O(2) and a proton gradient subsequently used for ATP formation. It consists of a core antenna complex that captures photons, and an electron transfer chain that converts photonic excitation into a charge separation. The D1/D2 (PsbA/PsbD) reaction center heterodimer binds P680, the primary electron donor of PSII as well as several subsequent electron acceptors. In Drimys granadensis, this protein is Photosystem II protein D1.